A 555-amino-acid polypeptide reads, in one-letter code: MADSTSLINKRTKGGWNAALFIIVVEIAERFAFYGLASNLITFLTNELGQSTATAAKNINTWIGVSCMFPILGAFLADSILGRFKTVLLTSFIYLLGIVMLPLSVTVVARRMREKVFFMALYVMAVGEGGHKPCVMTFAADQFGEANAEEKAAKTSFFNYWYMAIVLASSIAVLALIFIQERVSWSLGFSIIAGSVVIAIVIFLIGIPKYRKQVPVGSPFTRVAQVMVAALKKWRLSSTRHHYGLCYEEEDEHKLESTNSNQVYLLARTNQFRFLDKATIIDEIDHNKNRNPWRLCTVNQVEEVKLILRLIPIWISLIMFCATLTQLNTFFLKQGSMMDRTIGNHFTIPPAAFQSIVGVTILILIPLYDRVFVPMVRKITNHHSGITSLQRIGVGLFVATFNMVICGLVEAKRLKVARDHGLIDSPKEVVPMSSLWLLPQYILVGIGDVFTIVGMQELFYDQMPETMRSIGAAIFISVVGVGSFVSTGIISTVQTISKSHGEEWLVNNLNRAHLDYYYWIIASLNAVSLCFYLFIANHFLYKKLQDKDDDVESER.

2 helical membrane passes run alanine 18–serine 38 and tryptophan 62–glycine 82. Threonine 86 carries the post-translational modification Phosphothreonine. A run of 10 helical transmembrane segments spans residues valine 87–valine 107, valine 116–methionine 136, asparagine 159–isoleucine 179, leucine 187–isoleucine 207, isoleucine 311–phenylalanine 331, isoleucine 348–tyrosine 368, isoleucine 392–lysine 412, leucine 435–methionine 455, isoleucine 470–isoleucine 490, and tyrosine 516–alanine 536.

Belongs to the major facilitator superfamily. Proton-dependent oligopeptide transporter (POT/PTR) (TC 2.A.17) family. In terms of tissue distribution, expressed in roots and flowers.

The protein localises to the membrane. The sequence is that of Protein NRT1/ PTR FAMILY 5.4 (NPF5.4) from Arabidopsis thaliana (Mouse-ear cress).